The following is a 457-amino-acid chain: Argininosuccinate lyase (457 aa).

The protein belongs to the lyase 1 family. Argininosuccinate lyase subfamily.

It is found in the cytoplasm. It catalyses the reaction 2-(N(omega)-L-arginino)succinate = fumarate + L-arginine. Its pathway is amino-acid biosynthesis; L-arginine biosynthesis; L-arginine from L-ornithine and carbamoyl phosphate: step 3/3. The protein is Argininosuccinate lyase of Erwinia tasmaniensis (strain DSM 17950 / CFBP 7177 / CIP 109463 / NCPPB 4357 / Et1/99).